Here is a 253-residue protein sequence, read N- to C-terminus: Transcriptional regulatory protein TcrA (253 aa).

The Response regulatory domain maps to 24 to 138 (RILVVEDEPK…ELFARLRALS (115 aa)). At Asp-73 the chain carries 4-aspartylphosphate. Positions 146–244 (PPTLEAGDLR…IRGAGYRLRK (99 aa)) form a DNA-binding region, ompR/PhoB-type.

Interacts with HK2. In terms of processing, phosphorylated by HK2.

Its subcellular location is the cytoplasm. Member of the three-protein two-component system HK1/HK2/TcrA. In Mycobacterium tuberculosis (strain ATCC 25618 / H37Rv), this protein is Transcriptional regulatory protein TcrA (tcrA).